Here is an 884-residue protein sequence, read N- to C-terminus: Formin-like protein 9 (884 aa).

A signal peptide spans 1-19 (MGMAMRCVLVLFSVSPVLL). A helical transmembrane segment spans residues 140–160 (IVALGVVGLCLVVLGVVIAAF). Disordered stretches follow at residues 179 to 204 (FHHGSRDQRSPAATRKVSSHPSPDPL), 295 to 318 (THDSPSDSSYQSLSPDCTSRLSPK), and 403 to 473 (TMTN…PLPR). Over residues 300–310 (SDSSYQSLSPD) the composition is skewed to low complexity. Residues 429–443 (KPAPPPPPQKNPPPN) show a composition bias toward pro residues. Residues 464 to 884 (VGKDGSPLPR…QTLNLVLPLK (421 aa)) enclose the FH2 domain.

Belongs to the formin-like family. Class-I subfamily.

It localises to the membrane. This Oryza sativa subsp. indica (Rice) protein is Formin-like protein 9 (FH9).